The sequence spans 213 residues: Ribosomal RNA small subunit methyltransferase G (213 aa).

S-adenosyl-L-methionine-binding positions include Gly-75, Phe-80, 128–129 (IE), and Arg-144.

This sequence belongs to the methyltransferase superfamily. RNA methyltransferase RsmG family.

It localises to the cytoplasm. It carries out the reaction guanosine(527) in 16S rRNA + S-adenosyl-L-methionine = N(7)-methylguanosine(527) in 16S rRNA + S-adenosyl-L-homocysteine. Its function is as follows. Specifically methylates the N7 position of guanine in position 527 of 16S rRNA. The protein is Ribosomal RNA small subunit methyltransferase G of Brucella ovis (strain ATCC 25840 / 63/290 / NCTC 10512).